The chain runs to 334 residues: Trans-3-hydroxy-L-proline dehydratase (334 aa).

C91 acts as the Proton acceptor in catalysis. Substrate is bound by residues 92-93 (GH), D250, and 255-256 (GT).

It belongs to the proline racemase family.

The enzyme catalyses trans-3-hydroxy-L-proline = 1-pyrroline-2-carboxylate + H2O. Catalyzes the dehydration of trans-3-hydroxy-L-proline (t3LHyp) to Delta(1)-pyrroline-2-carboxylate (Pyr2C). Is likely involved in a degradation pathway that converts t3LHyp to L-proline, which allows B.cereus to grow on t3LHyp as a sole carbon source. Displays no proline racemase activity. This is Trans-3-hydroxy-L-proline dehydratase from Bacillus cereus (strain ATCC 14579 / DSM 31 / CCUG 7414 / JCM 2152 / NBRC 15305 / NCIMB 9373 / NCTC 2599 / NRRL B-3711).